A 377-amino-acid chain; its full sequence is Dehydrogenase/reductase SDR family member 13 (377 aa).

A signal peptide spans 1-25 (MEALLLGAGLLLGAYVLVYYNLVKA). Residues Ser46 and Ile48 each coordinate NAD(+). Ser170 lines the substrate pocket. Positions 197, 201, and 232 each coordinate NAD(+). Tyr197 (proton acceptor) is an active-site residue. Positions 309–377 (RLAGLGPGED…AKVEPEIQLS (69 aa)) are disordered. The span at 317–331 (EDAEPDEDPQSEDSE) shows a compositional bias: acidic residues. Residues 347 to 357 (SQPYPSPQSSP) are compositionally biased toward low complexity. Over residues 368 to 377 (AKVEPEIQLS) the composition is skewed to basic and acidic residues.

Belongs to the short-chain dehydrogenases/reductases (SDR) family.

The protein resides in the secreted. Functionally, putative oxidoreductase. This chain is Dehydrogenase/reductase SDR family member 13, found in Homo sapiens (Human).